The sequence spans 667 residues: Soluble guanylate cyclase 89Da (667 aa).

Histidine 104 is a heme binding site. Residues 337-364 (AQEFSESHPVDDDESAREDEIDPATGER) form a disordered region. The segment covering 347–358 (DDDESAREDEID) has biased composition (acidic residues). Residues 427–455 (QHCSKLEIMFEKEEQRSDELEKSLELADS) adopt a coiled-coil conformation. A Guanylate cyclase domain is found at 491–617 (SVIFLEVMNV…DTVNTASRME (127 aa)).

The protein belongs to the adenylyl cyclase class-4/guanylyl cyclase family. As to quaternary structure, heterodimer; with Gyc88E, in the presence of magnesium or manganese. Heme is required as a cofactor.

The protein resides in the cytoplasm. It carries out the reaction GTP = 3',5'-cyclic GMP + diphosphate. Probably not activated by nitric oxide (NO). Heterodimer also exhibits some stimulation, some compounds (SIN-1 and two of the NONOates) that were ineffective at stimulating Gyc-88E alone did stimulate the heterodimer. Functionally, heterodimers with Gyc-89Da and Gyc-89Db are activated in response to changing oxygen concentrations, alerting flies to hypoxic environments. Under normal oxygen concentrations, oxygen binds to the heme group and results in low levels of guanylyl cyclase activity. When exposed to reduced oxygen concentrations, the oxygen dissociates from the heme group resulting in activation of the enzyme. This Drosophila melanogaster (Fruit fly) protein is Soluble guanylate cyclase 89Da.